The chain runs to 271 residues: Ribosomal RNA small subunit methyltransferase A (271 aa).

S-adenosyl-L-methionine contacts are provided by asparagine 28, leucine 30, glycine 54, glutamate 75, aspartate 99, and asparagine 117.

Belongs to the class I-like SAM-binding methyltransferase superfamily. rRNA adenine N(6)-methyltransferase family. RsmA subfamily.

The protein resides in the cytoplasm. The catalysed reaction is adenosine(1518)/adenosine(1519) in 16S rRNA + 4 S-adenosyl-L-methionine = N(6)-dimethyladenosine(1518)/N(6)-dimethyladenosine(1519) in 16S rRNA + 4 S-adenosyl-L-homocysteine + 4 H(+). In terms of biological role, specifically dimethylates two adjacent adenosines (A1518 and A1519) in the loop of a conserved hairpin near the 3'-end of 16S rRNA in the 30S particle. May play a critical role in biogenesis of 30S subunits. This chain is Ribosomal RNA small subunit methyltransferase A, found in Thermus thermophilus (strain ATCC 27634 / DSM 579 / HB8).